The following is a 217-amino-acid chain: 3-isopropylmalate dehydratase small subunit (217 aa).

It belongs to the LeuD family. LeuD type 1 subfamily. In terms of assembly, heterodimer of LeuC and LeuD.

It carries out the reaction (2R,3S)-3-isopropylmalate = (2S)-2-isopropylmalate. It functions in the pathway amino-acid biosynthesis; L-leucine biosynthesis; L-leucine from 3-methyl-2-oxobutanoate: step 2/4. Catalyzes the isomerization between 2-isopropylmalate and 3-isopropylmalate, via the formation of 2-isopropylmaleate. In Paracidovorax citrulli (strain AAC00-1) (Acidovorax citrulli), this protein is 3-isopropylmalate dehydratase small subunit.